Here is a 192-residue protein sequence, read N- to C-terminus: Cytidylate kinase (192 aa).

7-15 is a binding site for ATP; the sequence is GPPGSGKST.

It belongs to the cytidylate kinase family. Type 2 subfamily.

The protein resides in the cytoplasm. The enzyme catalyses CMP + ATP = CDP + ADP. It catalyses the reaction dCMP + ATP = dCDP + ADP. The chain is Cytidylate kinase from Halobacterium salinarum (strain ATCC 29341 / DSM 671 / R1).